A 662-amino-acid polypeptide reads, in one-letter code: Protein associated with UVRAG as autophagy enhancer (662 aa).

Disordered stretches follow at residues 1 to 34 (MVSQ…RLLN) and 58 to 131 (DVQQ…SLSS). Over residues 58–71 (DVQQQPQDLQSQVP) the composition is skewed to low complexity. The span at 100–113 (AETTLSEDTTDSVG) shows a compositional bias: polar residues. A compositionally biased stretch (low complexity) spans 114–131 (SASPHGSSEKSSSFSLSS). Phosphoserine; by MTOR is present on Ser157. The tract at residues 196-235 (EVFVLPVDVEKENAHFYVADMIISAMEKMKCNILSQQQTE) is interaction with UVRAG. N6-acetyllysine occurs at positions 483, 523, 533, 573, and 633.

As to quaternary structure, interacts with UVRAG; the interaction is direct and promotes association with the PI3K/PI3KC3 and HOPS complexes. Interacts with STX17. Post-translationally, phosphorylated by MTOR at Ser-157 under nutrient-rich conditions. Phosphorylation prevents acetylation by KAT5/TIP60 and impairs RUBCNL/PACER function and autophagosome maturation. Under autophagy induction, Phosphorylation by MTOR is repressed, enabling acetylation by KAT5/TIP60. In terms of processing, acetylated by KAT5/TIP60 under autophagy induction, promoting autophagosome maturation and lipid metabolism. Acetylation is prevented by phosphorylation by MTOR. Lys-483 and Lys-573 constitute the key sites for tuning function in autophagy. As to expression, expressed weakly in cervical carcinoma cell lines.

The protein localises to the cytoplasmic vesicle. It is found in the autophagosome membrane. Regulator of autophagy that promotes autophagosome maturation by facilitating the biogenesis of phosphatidylinositol 3-phosphate (PtdIns(3)P) in late steps of autophagy. Acts by antagonizing RUBCN, thereby stimulating phosphatidylinositol 3-kinase activity of the PI3K/PI3KC3 complex. Following anchorage to the autophagosomal SNARE STX17, promotes the recruitment of PI3K/PI3KC3 and HOPS complexes to the autophagosome to regulate the fusion specificity of autophagosomes with late endosomes/lysosomes. Binds phosphoinositides phosphatidylinositol 3-phosphate (PtdIns(3)P), 4-phosphate (PtdIns(4)P) and 5-phosphate (PtdIns(5)P). In addition to its role in autophagy, acts as a regulator of lipid and glycogen homeostasis. May act as a tumor suppressor. The sequence is that of Protein associated with UVRAG as autophagy enhancer from Homo sapiens (Human).